A 346-amino-acid chain; its full sequence is tRNA N6-adenosine threonylcarbamoyltransferase (346 aa).

2 residues coordinate Fe cation: His111 and His115. Substrate is bound by residues 134–138, Asp167, Gly180, and Asn279; that span reads LVSGG. Residue Asp307 coordinates Fe cation.

It belongs to the KAE1 / TsaD family. Requires Fe(2+) as cofactor.

The protein resides in the cytoplasm. It carries out the reaction L-threonylcarbamoyladenylate + adenosine(37) in tRNA = N(6)-L-threonylcarbamoyladenosine(37) in tRNA + AMP + H(+). In terms of biological role, required for the formation of a threonylcarbamoyl group on adenosine at position 37 (t(6)A37) in tRNAs that read codons beginning with adenine. Is involved in the transfer of the threonylcarbamoyl moiety of threonylcarbamoyl-AMP (TC-AMP) to the N6 group of A37, together with TsaE and TsaB. TsaD likely plays a direct catalytic role in this reaction. The polypeptide is tRNA N6-adenosine threonylcarbamoyltransferase (Burkholderia mallei (strain ATCC 23344)).